A 1096-amino-acid chain; its full sequence is DNA-directed RNA polymerase subunit beta (1096 aa).

The segment at 1070-1096 is disordered; the sequence is LMQDVNPRRSTPSRPTYESLGSDYQED.

This sequence belongs to the RNA polymerase beta chain family. In terms of assembly, in cyanobacteria the RNAP catalytic core is composed of 2 alpha, 1 beta, 1 beta', 1 gamma and 1 omega subunit. When a sigma factor is associated with the core the holoenzyme is formed, which can initiate transcription.

It catalyses the reaction RNA(n) + a ribonucleoside 5'-triphosphate = RNA(n+1) + diphosphate. DNA-dependent RNA polymerase catalyzes the transcription of DNA into RNA using the four ribonucleoside triphosphates as substrates. This Prochlorococcus marinus (strain MIT 9211) protein is DNA-directed RNA polymerase subunit beta.